We begin with the raw amino-acid sequence, 252 residues long: GTP cyclohydrolase 1 type 2 homolog (252 aa).

The a divalent metal cation site is built by histidine 65, histidine 66, aspartate 103, histidine 220, and glutamate 224.

It belongs to the GTP cyclohydrolase I type 2/NIF3 family. In terms of assembly, homohexamer.

The polypeptide is GTP cyclohydrolase 1 type 2 homolog (Pseudomonas aeruginosa (strain ATCC 15692 / DSM 22644 / CIP 104116 / JCM 14847 / LMG 12228 / 1C / PRS 101 / PAO1)).